The primary structure comprises 485 residues: GlcNAc-binding protein A (485 aa).

A signal peptide spans 1–23 (MKKQPKMTAIALILSGISGLAYG). Residues 24–201 (HGYVSAVENG…SFYNVIDVKF (178 aa)) form the Chitin-binding type-4 domain. The Chitin-binding type-3 domain occupies 437 to 478 (AGTKVLASDGAIYQCKPWPYSGYCQQWTSNATQYQPGTGSHW).

This sequence belongs to the GbpA family.

The protein resides in the secreted. Its function is as follows. Probably interacts with GlcNAc residues. May promote attachment to both epithelial cell surfaces and chitin. In Vibrio cholerae serotype O1 (strain M66-2), this protein is GlcNAc-binding protein A.